The sequence spans 180 residues: MGLNYNQEDFMGLDRFFQDAVSHNNTDANAASSIEVEMYECDCMYPTFAEIARRSGQPEIGAMFDAIAKEEGMHAQLLTKLYSELEVKDSAETLEAKRLVSTIESQIDAVASDSRGLRRALETALEVETIESQKTYPAFAKLAAEQGNMEVATAFEAIVKSETKHANWVKRALENLLEVA.

Residues 17–127 (FQDAVSHNNT…RRALETALEV (111 aa)) constitute a cross-link (3-(L-phenylalan-2'-yl)-L-valine (Phe-Val)). The region spanning 21–180 (VSHNNTDANA…RALENLLEVA (160 aa)) is the Ferritin-like diiron domain. Fe(3+)-binding residues include Glu37, Glu40, Glu71, Glu128, Glu131, Glu162, and His165.

In terms of assembly, monomer. Fe(3+) serves as cofactor.

It is found in the plastid. The protein localises to the cyanelle. Its function is as follows. Exhibits oxidase-like and peroxidase-like activities in vitro. This is Symerythrin from Cyanophora paradoxa.